Here is a 549-residue protein sequence, read N- to C-terminus: Glucose-6-phosphate isomerase (549 aa).

Residue Glu353 is the Proton donor of the active site. Catalysis depends on residues His384 and Lys510. The disordered stretch occupies residues 523 to 549 (AEPPAAQSDSSTDALVRRYRSERGRTA). The segment covering 537–549 (LVRRYRSERGRTA) has biased composition (basic and acidic residues).

The protein belongs to the GPI family.

Its subcellular location is the cytoplasm. It catalyses the reaction alpha-D-glucose 6-phosphate = beta-D-fructose 6-phosphate. The protein operates within carbohydrate biosynthesis; gluconeogenesis. It participates in carbohydrate degradation; glycolysis; D-glyceraldehyde 3-phosphate and glycerone phosphate from D-glucose: step 2/4. Its function is as follows. Catalyzes the reversible isomerization of glucose-6-phosphate to fructose-6-phosphate. The sequence is that of Glucose-6-phosphate isomerase from Mycolicibacterium gilvum (strain PYR-GCK) (Mycobacterium gilvum (strain PYR-GCK)).